A 317-amino-acid chain; its full sequence is UV DNA damage endonuclease (317 aa).

It belongs to the uve1/UvsE family.

In terms of biological role, component in a DNA repair pathway. Removal of UV LIGHT damaged nucleotides. Recognizes pyrimidine dimers and cleave a phosphodiester bond immediately 5' to the lesion. This Bacillus cereus (strain G9842) protein is UV DNA damage endonuclease.